The sequence spans 227 residues: MNDLPRAELPGSGSPNPESLILASGSPRRAQLLSAAGYEFSVQPASDSAECGICSRETAPEMVARLAYRKAADVVARIDDGLVLAADTVASCVGNILGKPHNRDHAEEMLRLLSGRNHDVFTGVCLWSRRDEKFVVDVVRTRLQMSDLTDQQLTEHLDSLRWDGKAGAFGYQDGNDWLKVIGNDSESNVVGLPMERLAELLENFEQNAEKITTPTIDSIESSDSSCS.

Positions 1–21 are disordered; sequence MNDLPRAELPGSGSPNPESLI. Asp87 acts as the Proton acceptor in catalysis.

The protein belongs to the Maf family. YhdE subfamily. The cofactor is a divalent metal cation.

The protein localises to the cytoplasm. The catalysed reaction is dTTP + H2O = dTMP + diphosphate + H(+). It carries out the reaction UTP + H2O = UMP + diphosphate + H(+). Nucleoside triphosphate pyrophosphatase that hydrolyzes dTTP and UTP. May have a dual role in cell division arrest and in preventing the incorporation of modified nucleotides into cellular nucleic acids. The protein is dTTP/UTP pyrophosphatase of Rhodopirellula baltica (strain DSM 10527 / NCIMB 13988 / SH1).